We begin with the raw amino-acid sequence, 264 residues long: Acyl-[acyl-carrier-protein]--UDP-N-acetylglucosamine O-acyltransferase (264 aa).

The protein belongs to the transferase hexapeptide repeat family. LpxA subfamily. Homotrimer.

The protein localises to the cytoplasm. It carries out the reaction a (3R)-hydroxyacyl-[ACP] + UDP-N-acetyl-alpha-D-glucosamine = a UDP-3-O-[(3R)-3-hydroxyacyl]-N-acetyl-alpha-D-glucosamine + holo-[ACP]. The protein operates within glycolipid biosynthesis; lipid IV(A) biosynthesis; lipid IV(A) from (3R)-3-hydroxytetradecanoyl-[acyl-carrier-protein] and UDP-N-acetyl-alpha-D-glucosamine: step 1/6. Functionally, involved in the biosynthesis of lipid A, a phosphorylated glycolipid that anchors the lipopolysaccharide to the outer membrane of the cell. In Albidiferax ferrireducens (strain ATCC BAA-621 / DSM 15236 / T118) (Rhodoferax ferrireducens), this protein is Acyl-[acyl-carrier-protein]--UDP-N-acetylglucosamine O-acyltransferase.